Reading from the N-terminus, the 105-residue chain is Large ribosomal subunit protein bL21 (105 aa).

This sequence belongs to the bacterial ribosomal protein bL21 family. Part of the 50S ribosomal subunit. Contacts protein L20.

Its function is as follows. This protein binds to 23S rRNA in the presence of protein L20. The polypeptide is Large ribosomal subunit protein bL21 (Parabacteroides distasonis (strain ATCC 8503 / DSM 20701 / CIP 104284 / JCM 5825 / NCTC 11152)).